A 921-amino-acid chain; its full sequence is Protein translocase subunit SecA (921 aa).

Residues Gln-87, 105–109 (GEGKT), and Asp-515 each bind ATP. A disordered region spans residues 575–594 (RRIDNQLRGRSGRQGDPGSS). Residues Cys-905, Cys-907, Cys-916, and Cys-917 each contribute to the Zn(2+) site.

The protein belongs to the SecA family. As to quaternary structure, monomer and homodimer. Part of the essential Sec protein translocation apparatus which comprises SecA, SecYEG and auxiliary proteins SecDF-YajC and YidC. Requires Zn(2+) as cofactor.

Its subcellular location is the cell inner membrane. It is found in the cytoplasm. It carries out the reaction ATP + H2O + cellular proteinSide 1 = ADP + phosphate + cellular proteinSide 2.. Functionally, part of the Sec protein translocase complex. Interacts with the SecYEG preprotein conducting channel. Has a central role in coupling the hydrolysis of ATP to the transfer of proteins into and across the cell membrane, serving both as a receptor for the preprotein-SecB complex and as an ATP-driven molecular motor driving the stepwise translocation of polypeptide chains across the membrane. This is Protein translocase subunit SecA from Polynucleobacter necessarius subsp. necessarius (strain STIR1).